We begin with the raw amino-acid sequence, 464 residues long: Probable LL-diaminopimelate aminotransferase, chloroplastic (464 aa).

Residues 1 to 39 (MAASPAAGAAAATVSSFVSPSSFSSVKASKPDRLRPARR) constitute a chloroplast transit peptide. G102 provides a ligand contact to substrate. Residue Y132 coordinates pyridoxal 5'-phosphate. The substrate site is built by E135, K167, Y190, and N247. N247, D275, Y278, S305, and S307 together coordinate pyridoxal 5'-phosphate. K308 bears the N6-(pyridoxal phosphate)lysine mark. A pyridoxal 5'-phosphate-binding site is contributed by R316. Substrate contacts are provided by N347 and R442.

The protein belongs to the class-I pyridoxal-phosphate-dependent aminotransferase family. LL-diaminopimelate aminotransferase subfamily. As to quaternary structure, homodimer. The cofactor is pyridoxal 5'-phosphate.

The protein resides in the plastid. The protein localises to the chloroplast. It carries out the reaction (2S,6S)-2,6-diaminopimelate + 2-oxoglutarate = (S)-2,3,4,5-tetrahydrodipicolinate + L-glutamate + H2O + H(+). The protein operates within amino-acid biosynthesis; L-lysine biosynthesis via DAP pathway; LL-2,6-diaminopimelate from (S)-tetrahydrodipicolinate (aminotransferase route): step 1/1. In terms of biological role, required for lysine biosynthesis. Catalyzes the direct conversion of tetrahydrodipicolinate to LL-diaminopimelate, a reaction that requires three enzymes in E.coli. This is Probable LL-diaminopimelate aminotransferase, chloroplastic (AGD2) from Oryza sativa subsp. japonica (Rice).